The primary structure comprises 441 residues: Ribulose bisphosphate carboxylase large chain (441 aa).

Substrate contacts are provided by asparagine 89 and threonine 139. Lysine 141 (proton acceptor) is an active-site residue. Lysine 143 contacts substrate. Mg(2+) contacts are provided by lysine 167, aspartate 169, and glutamate 170. At lysine 167 the chain carries N6-carboxylysine. The active-site Proton acceptor is the histidine 260. 3 residues coordinate substrate: arginine 261, histidine 293, and serine 345.

This sequence belongs to the RuBisCO large chain family. Type I subfamily. In terms of assembly, heterohexadecamer of 8 large chains and 8 small chains; disulfide-linked. The disulfide link is formed within the large subunit homodimers. The cofactor is Mg(2+). The disulfide bond which can form in the large chain dimeric partners within the hexadecamer appears to be associated with oxidative stress and protein turnover.

Its subcellular location is the plastid. It localises to the chloroplast. The enzyme catalyses 2 (2R)-3-phosphoglycerate + 2 H(+) = D-ribulose 1,5-bisphosphate + CO2 + H2O. It carries out the reaction D-ribulose 1,5-bisphosphate + O2 = 2-phosphoglycolate + (2R)-3-phosphoglycerate + 2 H(+). Its function is as follows. RuBisCO catalyzes two reactions: the carboxylation of D-ribulose 1,5-bisphosphate, the primary event in carbon dioxide fixation, as well as the oxidative fragmentation of the pentose substrate in the photorespiration process. Both reactions occur simultaneously and in competition at the same active site. The sequence is that of Ribulose bisphosphate carboxylase large chain from Viola sororia (Woolly blue violet).